The sequence spans 197 residues: ATP-dependent Clp protease proteolytic subunit (197 aa).

Residue serine 98 is the Nucleophile of the active site. Histidine 123 is an active-site residue.

Belongs to the peptidase S14 family. In terms of assembly, fourteen ClpP subunits assemble into 2 heptameric rings which stack back to back to give a disk-like structure with a central cavity, resembling the structure of eukaryotic proteasomes.

It is found in the cytoplasm. The catalysed reaction is Hydrolysis of proteins to small peptides in the presence of ATP and magnesium. alpha-casein is the usual test substrate. In the absence of ATP, only oligopeptides shorter than five residues are hydrolyzed (such as succinyl-Leu-Tyr-|-NHMec, and Leu-Tyr-Leu-|-Tyr-Trp, in which cleavage of the -Tyr-|-Leu- and -Tyr-|-Trp bonds also occurs).. Cleaves peptides in various proteins in a process that requires ATP hydrolysis. Has a chymotrypsin-like activity. Plays a major role in the degradation of misfolded proteins. The chain is ATP-dependent Clp protease proteolytic subunit from Pediococcus pentosaceus (strain ATCC 25745 / CCUG 21536 / LMG 10740 / 183-1w).